Reading from the N-terminus, the 550-residue chain is Natural resistance-associated macrophage protein 1 (550 aa).

The segment at Met-1–Ile-45 is disordered. Topologically, residues Met-1–Leu-58 are cytoplasmic. Residues Ser-11–Ser-23 show a composition bias toward low complexity. Residues Trp-59–Gly-76 form a helical membrane-spanning segment. Residues Asn-77–Gly-85 are Extracellular-facing. A helical transmembrane segment spans residues Ala-86–Leu-105. The Cytoplasmic segment spans residues Cys-106–Glu-142. A helical transmembrane segment spans residues Leu-143–Leu-163. At Ser-164 to Arg-167 the chain is on the extracellular side. The chain crosses the membrane as a helical span at residues Ile-168–Leu-187. The Cytoplasmic segment spans residues Asp-188–Glu-196. Residues Ala-197–Ala-217 form a helical membrane-spanning segment. Residues Arg-218–Glu-240 are Extracellular-facing. The chain crosses the membrane as a helical span at residues Leu-241–Leu-259. Residues His-260 to Glu-287 lie on the Cytoplasmic side of the membrane. The helical transmembrane segment at Ala-288–Gly-307 threads the bilayer. Over Gln-308–Gly-349 the chain is Extracellular. 2 N-linked (GlcNAc...) asparagine glycosylation sites follow: Asn-324 and Asn-338. A helical transmembrane segment spans residues Val-350 to Leu-369. The Cytoplasmic portion of the chain corresponds to Ala-370–Arg-400. A helical transmembrane segment spans residues Val-401–Phe-418. Residues Arg-419–Asp-429 are Extracellular-facing. Residues Leu-430–Thr-450 form a helical membrane-spanning segment. Topologically, residues Ser-451–Lys-466 are cytoplasmic. A helical transmembrane segment spans residues Val-467–Leu-488. Topologically, residues Pro-489–Tyr-496 are extracellular. A helical transmembrane segment spans residues Phe-497–Trp-516. Residues Thr-517 to Gly-550 lie on the Cytoplasmic side of the membrane.

It belongs to the NRAMP family. In terms of tissue distribution, macrophages; peripheral blood leukocytes, lung, spleen and liver.

The protein resides in the late endosome membrane. It is found in the lysosome membrane. It carries out the reaction Zn(2+)(in) + H(+)(out) = Zn(2+)(out) + H(+)(in). It catalyses the reaction Fe(2+)(in) + H(+)(out) = Fe(2+)(out) + H(+)(in). The catalysed reaction is Mn(2+)(in) + H(+)(out) = Mn(2+)(out) + H(+)(in). Its function is as follows. Macrophage-specific antiporter that fluxes metal ions in either direction against a proton gradient. Localized to late endosomal lysosomal membranes, delivers bivalent cations from the cytosol into these acidic compartments where they may directly affect antimicrobial activity. Involved in iron metabolism and host natural resistance to infection with intracellular parasites. Pathogen resistance involves sequestration of Fe(2+) and Mn(2+), cofactors of both prokaryotic and eukaryotic catalases and superoxide dismutases, not only to protect the macrophage against its own generation of reactive oxygen species, but to deny the cations to the pathogen for synthesis of its protective enzymes. The chain is Natural resistance-associated macrophage protein 1 from Homo sapiens (Human).